The following is a 2593-amino-acid chain: Citrinin polyketide synthase (2593 aa).

The interval K70–R224 is N-terminal acylcarrier protein transacylase domain (SAT). C139 acts as the Nucleophile; for transacylase activity in catalysis. The active-site Proton donor/acceptor; for transacylase activity is H258. The 416-residue stretch at D391–Q806 folds into the Ketosynthase family 3 (KS3) domain. Catalysis depends on for beta-ketoacyl synthase activity residues C555, H690, and H729. Residues P906 to N1191 are malonyl-CoA:ACP transacylase (MAT) domain. An N-terminal hotdog fold region spans residues P1291–S1424. Residues P1291–R1603 form the PKS/mFAS DH domain. The segment at L1322–G1601 is product template (PT) domain. The Proton acceptor; for dehydratase activity role is filled by H1326. The C-terminal hotdog fold stretch occupies residues V1451–R1603. The active-site Proton donor; for dehydratase activity is the D1508. The segment at V1636–P1662 is disordered. The region spanning A1661–L1738 is the Carrier domain. S1689 is modified (O-(pantetheine 4'-phosphoryl)serine). Catalysis depends on for methyltransferase activity residues Y1955, H2067, and E2093. Residues I1960 to S2134 form a methyltransferase (CMeT) domain region. The segment at P2215–L2459 is NADPH-binding (R) domain.

Pantetheine 4'-phosphate serves as cofactor.

It functions in the pathway mycotoxin biosynthesis. Its function is as follows. Non-reducing polyketide synthase; part of the gene cluster that mediates the biosynthesis of the mycotoxin citrinin, a hepato-nephrotoxic compound to humans due to inhibition of respiration complex III. The pathway begins with the synthesis of a keto-aldehyde intermediate by the citrinin PKS (pksCT) from successive condensations of 4 malonyl-CoA units, presumably with a simple acetyl-CoA starter unit. Release of the keto-aldehyde intermediate is consistent with the presence of the C-terminal reductive release domain. Mp11 collaborates with pksCT by catalyzing the hydrolysis of ACP-bound acyl intermediates to free the ACP from stalled intermediates. Mpl2 then catalyzes the oxidation of the C-12 methyl of the ketone intermediate to an alcohol intermediate which is further oxidized by the oxidoreductase mpl7 to produce a bisaldehyde intermediate. The fourth catalytic step is catalyzed by the mpl4 aldehyde dehydrogenase. The final transformation is the reduction of C-3 by mpl6 to provide the chemically stable citrinin nucleus. The sequence is that of Citrinin polyketide synthase from Monascus purpureus (Red mold).